The following is a 333-amino-acid chain: Glycerol-3-phosphate dehydrogenase [NAD(P)+] (333 aa).

The NADPH site is built by serine 10, tryptophan 11, histidine 31, arginine 32, and lysine 105. Residues lysine 105, glycine 136, and serine 138 each contribute to the sn-glycerol 3-phosphate site. An NADPH-binding site is contributed by alanine 140. Lysine 191, aspartate 244, serine 254, arginine 255, and asparagine 256 together coordinate sn-glycerol 3-phosphate. Lysine 191 functions as the Proton acceptor in the catalytic mechanism. Arginine 255 is an NADPH binding site. NADPH is bound by residues valine 279 and glutamate 281.

It belongs to the NAD-dependent glycerol-3-phosphate dehydrogenase family.

The protein resides in the cytoplasm. The enzyme catalyses sn-glycerol 3-phosphate + NAD(+) = dihydroxyacetone phosphate + NADH + H(+). The catalysed reaction is sn-glycerol 3-phosphate + NADP(+) = dihydroxyacetone phosphate + NADPH + H(+). It participates in membrane lipid metabolism; glycerophospholipid metabolism. Catalyzes the reduction of the glycolytic intermediate dihydroxyacetone phosphate (DHAP) to sn-glycerol 3-phosphate (G3P), the key precursor for phospholipid synthesis. This is Glycerol-3-phosphate dehydrogenase [NAD(P)+] from Chlorobium phaeobacteroides (strain DSM 266 / SMG 266 / 2430).